Here is a 327-residue protein sequence, read N- to C-terminus: MKEISGIKVKVESGSKYTTDHGFHAVKDGIRNKKENAVHVRKPDWLKVQKQDSKEYLKVKSITKKHKLSTVCEEARCPNINECWSHGTATIMLMGSVCTRACKFCSVDTGNPKGWLDKDEPMNAAESVKLMGLEYVVLTSVDRDDLEDGGAGHYAATITAIKNLDENIKVEALTPDFAGINENIDKIINTKVDVIAQNIETVERLTHPVRDPRAGYWQTLNFLKYVKQKSPNVLTKTSIMVGLGETDEEIYKTMDDARSVGVDIITLGQYMQPTKHHLSVERFVTPQQFEEYRKVGLEKGFLEVASGPMVRSSYRADRVFKRNNLDL.

[4Fe-4S] cluster-binding residues include C72, C77, C83, C98, C102, C105, and S313. Residues 83-302 (CWSHGTATIM…RKVGLEKGFL (220 aa)) form the Radical SAM core domain.

Belongs to the radical SAM superfamily. Lipoyl synthase family. Requires [4Fe-4S] cluster as cofactor.

Its subcellular location is the cytoplasm. It carries out the reaction [[Fe-S] cluster scaffold protein carrying a second [4Fe-4S](2+) cluster] + N(6)-octanoyl-L-lysyl-[protein] + 2 oxidized [2Fe-2S]-[ferredoxin] + 2 S-adenosyl-L-methionine + 4 H(+) = [[Fe-S] cluster scaffold protein] + N(6)-[(R)-dihydrolipoyl]-L-lysyl-[protein] + 4 Fe(3+) + 2 hydrogen sulfide + 2 5'-deoxyadenosine + 2 L-methionine + 2 reduced [2Fe-2S]-[ferredoxin]. Its pathway is protein modification; protein lipoylation via endogenous pathway; protein N(6)-(lipoyl)lysine from octanoyl-[acyl-carrier-protein]: step 2/2. Functionally, catalyzes the radical-mediated insertion of two sulfur atoms into the C-6 and C-8 positions of the octanoyl moiety bound to the lipoyl domains of lipoate-dependent enzymes, thereby converting the octanoylated domains into lipoylated derivatives. The chain is Lipoyl synthase from Francisella tularensis subsp. novicida (strain U112).